A 123-amino-acid polypeptide reads, in one-letter code: MIQEQTMLNVADNSGARRVMCIKVLGGSHRRYAGIGDIIKITIKEAIPRGKVKKGDVLKAVVVRTKKGVRRPDGSVIRFDGNACVILNNNSEQPIGTRIFGPVTRELRNEKFMKIISLAPEVL.

This sequence belongs to the universal ribosomal protein uL14 family. As to quaternary structure, part of the 50S ribosomal subunit. Forms a cluster with proteins L3 and L19. In the 70S ribosome, L14 and L19 interact and together make contacts with the 16S rRNA in bridges B5 and B8.

Binds to 23S rRNA. Forms part of two intersubunit bridges in the 70S ribosome. This chain is Large ribosomal subunit protein uL14, found in Yersinia pestis bv. Antiqua (strain Antiqua).